Reading from the N-terminus, the 237-residue chain is Phosphoadenosine 5'-phosphosulfate reductase (237 aa).

Catalysis depends on cysteine 231, which acts as the Nucleophile; cysteine thiosulfonate intermediate.

It belongs to the PAPS reductase family. CysH subfamily.

The protein localises to the cytoplasm. The enzyme catalyses [thioredoxin]-disulfide + sulfite + adenosine 3',5'-bisphosphate + 2 H(+) = [thioredoxin]-dithiol + 3'-phosphoadenylyl sulfate. It functions in the pathway sulfur metabolism; hydrogen sulfide biosynthesis; sulfite from sulfate: step 3/3. Catalyzes the formation of sulfite from phosphoadenosine 5'-phosphosulfate (PAPS) using thioredoxin as an electron donor. The chain is Phosphoadenosine 5'-phosphosulfate reductase from Xylella fastidiosa (strain M23).